A 1071-amino-acid chain; its full sequence is SLIT-ROBO Rho GTPase-activating protein 2 (1071 aa).

The F-BAR domain maps to 22-325; that stretch reads KEIRAQLTEQ…AVENLDATSD (304 aa). Basic and acidic residues predominate over residues 181–203; it reads LKEAEKQEEKQIGKSVKQEDRQT. The tract at residues 181 to 211 is disordered; that stretch reads LKEAEKQEEKQIGKSVKQEDRQTPRSPDSTA. Ser-206 carries the post-translational modification Phosphoserine. The stretch at 362–401 forms a coiled coil; sequence VQSELVQRCQQLQSRLSTLKIENEEVKKTMEATLQTIQDI. Ser-427, Ser-500, Ser-691, and Ser-695 each carry phosphoserine. In terms of domain architecture, Rho-GAP spans 489–679; it reads ARRSSTVRKQ…TIIIQHENIF (191 aa). Residues 698-726 are disordered; sequence DYCDSPHGETTSVEDSTQDVTAEHHTSDD. Residues 705–717 show a composition bias toward polar residues; it reads GETTSVEDSTQDV. Residue Ser-724 is modified to Phosphoserine. The SH3 domain maps to 728–787; sequence CEPIEAIAKFDYVGRTARELSFKKGASLLLYQRASDDWWEGRHNGIDGLIPHQYIVVQDT. At Ser-795 the chain carries Phosphoserine. The tract at residues 837–936 is disordered; it reads QRKRPESGSI…RSKSFNNHRP (100 aa). A compositionally biased stretch (low complexity) spans 855 to 866; it reads HGLSSSLTDSSS. 2 stretches are compositionally biased toward polar residues: residues 874–885 and 897–907; these read RPSSQPIMSQSL and GHGSLNSISRH. Phosphoserine is present on Ser-916. Positions 919-933 are enriched in polar residues; it reads IRKTATAGRSKSFNN. Arg-927 carries the post-translational modification Symmetric dimethylarginine; by PRMT5. Residue Ser-930 is modified to Phosphoserine. Residues 940–967 adopt a coiled-coil conformation; that stretch reads EVIAQDIEATMNSALNELRELERQSSVK. The disordered stretch occupies residues 983–1012; it reads SPVVAPTSEPSSPLHTQLLKDPEPAFQRSA. Residues Ser-990, Ser-994, Ser-1013, and Ser-1027 each carry the phosphoserine modification. Residues 1029–1071 are disordered; sequence KMAAPVKPPATRPKPTVFPKTNATSPGVNSSTSPQSTDKSCTV. Residues 1047-1071 are compositionally biased toward polar residues; sequence PKTNATSPGVNSSTSPQSTDKSCTV.

As to quaternary structure, homodimer. Heterodimer; forms a heterodimer with SRGAP2C, altering SRGAP2 function. Forms a heterooligomer with SRGAP1 and SRGAP3 through its F-BAR domain. Interacts (via SH3 domain) with GPHN. Interacts (via SH3 domain) with FMNL1 (activated by RAC1); regulates the actin filament severing activity of FMNL1 and actin dynamics. Interacts (via SH3 domain) with FMNL3. Interacts with RAC1; specifically stimulates RAC1 GTPase activity. Interacts (via F-BAR domain) with HOMER1. Interacts with ROBO1 and ROBO2. Interacts with FASLG. Interacts with PRMT5. Post-translationally, methylation at Arg-927 is required for the stimulation of cell migration, dimerization and localization at the plasma membrane protrusions.

It is found in the cell membrane. The protein resides in the cell projection. It localises to the dendritic spine. Its subcellular location is the postsynaptic density. The protein localises to the postsynaptic cell membrane. It is found in the lamellipodium. The protein resides in the cytoplasmic vesicle. It localises to the phagosome. Its subcellular location is the nucleus. The protein localises to the cytoplasm. It is found in the cytosol. With respect to regulation, activity is strongly inhibited by SRGAP2C, which heterodimerize with SRGAP2/SRGAP2A, thereby reducing SRGAP2/SRGAP2A levels through proteasome-dependent degradation. Functionally, postsynaptic RAC1 GTPase activating protein (GAP) that plays a key role in neuronal morphogenesis and migration mainly during development of the cerebral cortex. Regulates excitatory and inhibitory synapse maturation and density in cortical pyramidal neurons. SRGAP2/SRGAP2A limits excitatory and inhibitory synapse density through its RAC1-specific GTPase activating activity, while it promotes maturation of both excitatory and inhibitory synapses through its ability to bind to the postsynaptic scaffolding protein HOMER1 at excitatory synapses, and the postsynaptic protein GPHN at inhibitory synapses. Mechanistically, acts by binding and deforming membranes, thereby regulating actin dynamics to regulate cell migration and differentiation. Promotes cell repulsion and contact inhibition of locomotion: localizes to protrusions with curved edges and controls the duration of RAC1 activity in contact protrusions. In non-neuronal cells, may also play a role in cell migration by regulating the formation of lamellipodia and filopodia. The sequence is that of SLIT-ROBO Rho GTPase-activating protein 2 from Homo sapiens (Human).